The sequence spans 150 residues: Macrodomain Ter protein (150 aa).

Belongs to the MatP family. As to quaternary structure, homodimer.

The protein resides in the cytoplasm. Required for spatial organization of the terminus region of the chromosome (Ter macrodomain) during the cell cycle. Prevents early segregation of duplicated Ter macrodomains during cell division. Binds specifically to matS, which is a 13 bp signature motif repeated within the Ter macrodomain. The protein is Macrodomain Ter protein of Shigella dysenteriae serotype 1 (strain Sd197).